The sequence spans 431 residues: MKIIDWNQLDTAAQAQTLTRPAQTIATQTREAVAALIEQVRRGGDTALRDITARLDGVDLATFEVTAAELAAAATAVAPELQHAMQTAAARIEAFHRAGMTNGYRVETAPGVVCERLVRPIARVGLYVPAGSAPLFSTALMLGVPARLAGCREVVLCTPPSKDGRANPAVLLAARLTGVTRVFTLGGAQAIAAMAYGTASVPTCDKVFGPGNSFVTEAKQQLAQAGVVAIDMPAGPSEVLVIADAAANPAFIAADLLSQAEHGPDSQVLLLSDSDALMTAVQTALALQLQQLSRAEIARQALAQSRLIKVATLETAFDISNRYAPEHLILALRQPRAWLHRVAAAGSVFLGDYTPEALGDYCSGTNHVLPTGGAARAYSGVSVSSFQNMISVQAASRSGIAEIGDCALTLARAEGLDAHANAVALRMGTVP.

NAD(+) is bound by residues Tyr-127, Gln-189, and Asn-212. Ser-237, Gln-259, and His-262 together coordinate substrate. Zn(2+)-binding residues include Gln-259 and His-262. Active-site proton acceptor residues include Glu-326 and His-327. Substrate is bound by residues His-327, Asp-360, Glu-414, and His-419. Position 360 (Asp-360) interacts with Zn(2+). A Zn(2+)-binding site is contributed by His-419.

The protein belongs to the histidinol dehydrogenase family. Requires Zn(2+) as cofactor.

It carries out the reaction L-histidinol + 2 NAD(+) + H2O = L-histidine + 2 NADH + 3 H(+). Its pathway is amino-acid biosynthesis; L-histidine biosynthesis; L-histidine from 5-phospho-alpha-D-ribose 1-diphosphate: step 9/9. Functionally, catalyzes the sequential NAD-dependent oxidations of L-histidinol to L-histidinaldehyde and then to L-histidine. In Xylella fastidiosa (strain 9a5c), this protein is Histidinol dehydrogenase.